The primary structure comprises 124 residues: Immunoglobulin lambda variable 5-52 (124 aa).

The signal sequence occupies residues 1 to 19 (MAWTLLLLVLLSHCTGSLS). Residues 20-44 (QPVLTQPSSHSASSGASVRLTCMLS) form a framework-1 region. An Ig-like domain is found at 21-124 (PVLTQPSSHS…CGTWHSNSKT (104 aa)). A disulfide bridge connects residues cysteine 41 and cysteine 115. Residues 45–53 (SGFSVGDFW) form a complementarity-determining-1 region. Residues 54–70 (IRWYQQKPGNPPRYLLY) form a framework-2 region. Residues 71–77 (YHSDSNK) form a complementarity-determining-2 region. The interval 78–115 (GQGSGVPSRFSGSNDASANAGILRISGLQPEDEADYYC) is framework-3. A complementarity-determining-3 region spans residues 116–124 (GTWHSNSKT).

As to quaternary structure, immunoglobulins are composed of two identical heavy chains and two identical light chains; disulfide-linked.

The protein resides in the secreted. It is found in the cell membrane. V region of the variable domain of immunoglobulin light chains that participates in the antigen recognition. Immunoglobulins, also known as antibodies, are membrane-bound or secreted glycoproteins produced by B lymphocytes. In the recognition phase of humoral immunity, the membrane-bound immunoglobulins serve as receptors which, upon binding of a specific antigen, trigger the clonal expansion and differentiation of B lymphocytes into immunoglobulins-secreting plasma cells. Secreted immunoglobulins mediate the effector phase of humoral immunity, which results in the elimination of bound antigens. The antigen binding site is formed by the variable domain of one heavy chain, together with that of its associated light chain. Thus, each immunoglobulin has two antigen binding sites with remarkable affinity for a particular antigen. The variable domains are assembled by a process called V-(D)-J rearrangement and can then be subjected to somatic hypermutations which, after exposure to antigen and selection, allow affinity maturation for a particular antigen. The sequence is that of Immunoglobulin lambda variable 5-52 from Homo sapiens (Human).